Here is a 126-residue protein sequence, read N- to C-terminus: Small ribosomal subunit protein uS13 (126 aa).

The disordered stretch occupies residues 94 to 126; sequence RGLPVHGQRTSTNARTRKGPRRAIAGKKKPGKK. The span at 108-126 shows a compositional bias: basic residues; it reads RTRKGPRRAIAGKKKPGKK.

This sequence belongs to the universal ribosomal protein uS13 family. As to quaternary structure, part of the 30S ribosomal subunit. Forms a loose heterodimer with protein S19. Forms two bridges to the 50S subunit in the 70S ribosome.

In terms of biological role, located at the top of the head of the 30S subunit, it contacts several helices of the 16S rRNA. In the 70S ribosome it contacts the 23S rRNA (bridge B1a) and protein L5 of the 50S subunit (bridge B1b), connecting the 2 subunits; these bridges are implicated in subunit movement. Contacts the tRNAs in the A and P-sites. The sequence is that of Small ribosomal subunit protein uS13 from Streptomyces griseus subsp. griseus (strain JCM 4626 / CBS 651.72 / NBRC 13350 / KCC S-0626 / ISP 5235).